The following is a 151-amino-acid chain: uncharacterized protein (151 aa).

To M.jannaschii MJ1244 and MJ1245.

This is an uncharacterized protein from Methanothermobacter thermautotrophicus (strain ATCC 29096 / DSM 1053 / JCM 10044 / NBRC 100330 / Delta H) (Methanobacterium thermoautotrophicum).